A 676-amino-acid polypeptide reads, in one-letter code: LIM domain-containing protein 1 (676 aa).

The mediates nuclear export stretch occupies residues 54–134; sequence KIHLQQQQQQ…PPYPPQEQRS (81 aa). Disordered stretches follow at residues 104–163 and 189–389; these read KPPL…SAFH and KWGD…TSLV. Ser-145 is subject to Phosphoserine. An interaction with EGLN1/PHD2 region spans residues 186–260; sequence ASPKWGDKPG…IGGRSSEKPT (75 aa). Low complexity-rich tracts occupy residues 201 to 213 and 232 to 242; these read GLSVGSGWPSSPG and LSLSSSRSSEG. Residues Ser-233 and Ser-239 each carry the phosphoserine modification. Gly residues predominate over residues 243–253; that stretch reads SLGGQNSGIGG. Residues 262-271 show a composition bias toward polar residues; that stretch reads LWSTASSQRV. Phosphoserine occurs at positions 272, 277, 304, and 316. Over residues 343–360 the composition is skewed to low complexity; that stretch reads SYLSSSAPSSSPAGLDGS. The segment at 404-442 is interaction with RB1; the sequence is GPLGWSSDGSLGSVLLDSPSSPRVRLPCQPLVPGPELRP. A phosphoserine mark is found at Ser-421 and Ser-424. LIM zinc-binding domains lie at 470–531, 535–595, and 595–664; these read GACV…SGFQ, DRCF…VLAP, and PKCA…RLEK. Positions 472 to 676 are necessary for nuclear localization; the sequence is CVKCSKGVFG…SSTALHQHHF (205 aa).

The protein belongs to the zyxin/ajuba family. As to quaternary structure, interacts (via LIM domains) with TRAF6. Found in a complex with TRAF6, PRKCZ and SQSTM1. Interacts (via LIM domains) SNAI2/SLUG (via SNAG domain) and SCRT1 (via SNAG domain). Interacts with SQSTM1 and RB1. Found in a complex composed of LIMD1, VHL, EGLN1/PHD2, ELOB and CUL2. Interacts with EIF4E, AGO1, AGO2, DCP2, DDX6, LATS1, LATS2, EGLN1/PHD2, EGLN2/PHD1 and EGLN3/PHD3. Interacts (via LIM zinc-binding 2) with isoform 1 and isoform 3 of VHL. Interacts (via LIM domains) with SNAI1 (via SNAG domain). Post-translationally, phosphorylated during mitosis. Expressed in normal and breast cancer tissues (at protein level). Ubiquitous.

It is found in the cytoplasm. The protein localises to the nucleus. The protein resides in the P-body. Its subcellular location is the cell junction. It localises to the adherens junction. It is found in the focal adhesion. In terms of biological role, adapter or scaffold protein which participates in the assembly of numerous protein complexes and is involved in several cellular processes such as cell fate determination, cytoskeletal organization, repression of gene transcription, cell-cell adhesion, cell differentiation, proliferation and migration. Positively regulates microRNA (miRNA)-mediated gene silencing and is essential for P-body formation and integrity. Acts as a hypoxic regulator by bridging an association between the prolyl hydroxylases and VHL enabling efficient degradation of HIF1A. Acts as a transcriptional corepressor for SNAI1- and SNAI2/SLUG-dependent repression of E-cadherin transcription. Negatively regulates the Hippo signaling pathway and antagonizes phosphorylation of YAP1. Inhibits E2F-mediated transcription, and suppresses the expression of the majority of genes with E2F1-responsive elements. Regulates osteoblast development, function, differentiation and stress osteoclastogenesis. Enhances the ability of TRAF6 to activate adapter protein complex 1 (AP-1) and negatively regulates the canonical Wnt receptor signaling pathway in osteoblasts. May act as a tumor suppressor by inhibiting cell proliferation. The chain is LIM domain-containing protein 1 (LIMD1) from Homo sapiens (Human).